A 124-amino-acid polypeptide reads, in one-letter code: MNLIAQLEAEQIAELGKDIPDFKAGDTIRVGYKVTEGTRSRVQNYEGVCIARKGGDGIAASFTVRKISFGEGVERVFPLHSTNIDSIEVVRRGKVRRAKLYYLRARRGKSARIAEQTNYKPKSN.

This sequence belongs to the bacterial ribosomal protein bL19 family.

Its function is as follows. This protein is located at the 30S-50S ribosomal subunit interface and may play a role in the structure and function of the aminoacyl-tRNA binding site. This chain is Large ribosomal subunit protein bL19, found in Dinoroseobacter shibae (strain DSM 16493 / NCIMB 14021 / DFL 12).